Consider the following 73-residue polypeptide: Translation initiation factor IF-1 (73 aa).

The region spanning 1–73 (MAKKEDTIVL…TKARVVYRHR (73 aa)) is the S1-like domain.

The protein belongs to the IF-1 family. In terms of assembly, component of the 30S ribosomal translation pre-initiation complex which assembles on the 30S ribosome in the order IF-2 and IF-3, IF-1 and N-formylmethionyl-tRNA(fMet); mRNA recruitment can occur at any time during PIC assembly.

The protein resides in the cytoplasm. Functionally, one of the essential components for the initiation of protein synthesis. Stabilizes the binding of IF-2 and IF-3 on the 30S subunit to which N-formylmethionyl-tRNA(fMet) subsequently binds. Helps modulate mRNA selection, yielding the 30S pre-initiation complex (PIC). Upon addition of the 50S ribosomal subunit IF-1, IF-2 and IF-3 are released leaving the mature 70S translation initiation complex. The chain is Translation initiation factor IF-1 from Chlamydia abortus (strain DSM 27085 / S26/3) (Chlamydophila abortus).